Reading from the N-terminus, the 302-residue chain is Probable lipid kinase YegS-like (302 aa).

The DAGKc domain maps to 1–129 (MDKDKVLLVL…IDLGEVNGKL (129 aa)). Residues T39, 65-71 (GDGTLRE), and T92 each bind ATP. R210, D213, and L215 together coordinate Mg(2+). E268 acts as the Proton acceptor in catalysis.

The protein belongs to the diacylglycerol/lipid kinase family. YegS lipid kinase subfamily. Mg(2+) is required as a cofactor. The cofactor is Ca(2+).

It is found in the cytoplasm. In terms of biological role, probably phosphorylates lipids; the in vivo substrate is unknown. The sequence is that of Probable lipid kinase YegS-like from Pseudomonas aeruginosa (strain ATCC 15692 / DSM 22644 / CIP 104116 / JCM 14847 / LMG 12228 / 1C / PRS 101 / PAO1).